Consider the following 528-residue polypeptide: Membrane protein insertase YidC (528 aa).

5 helical membrane passes run 13–33 (ILLAVVISFLFFVIYDYFFIP), 336–356 (WGWAIVVMTLIVRIILFPLTY), 406–426 (LPILLQIPIFFAIYRVLLNAI), 446–466 (YFILPILMGATMFLQQLITPM), and 481–501 (PVIFTFFFITFPAGLTLYWFV).

The protein belongs to the OXA1/ALB3/YidC family. Type 1 subfamily. Interacts with the Sec translocase complex via SecD. Specifically interacts with transmembrane segments of nascent integral membrane proteins during membrane integration.

The protein localises to the cell inner membrane. Its function is as follows. Required for the insertion and/or proper folding and/or complex formation of integral membrane proteins into the membrane. Involved in integration of membrane proteins that insert both dependently and independently of the Sec translocase complex, as well as at least some lipoproteins. Aids folding of multispanning membrane proteins. This chain is Membrane protein insertase YidC, found in Campylobacter jejuni subsp. jejuni serotype O:2 (strain ATCC 700819 / NCTC 11168).